The primary structure comprises 329 residues: 4-hydroxy-3-methylbut-2-enyl diphosphate reductase (329 aa).

A [4Fe-4S] cluster-binding site is contributed by Cys-27. (2E)-4-hydroxy-3-methylbut-2-enyl diphosphate contacts are provided by His-56 and His-89. Residues His-56 and His-89 each coordinate dimethylallyl diphosphate. The isopentenyl diphosphate site is built by His-56 and His-89. Cys-111 is a [4Fe-4S] cluster binding site. Residue His-139 participates in (2E)-4-hydroxy-3-methylbut-2-enyl diphosphate binding. His-139 lines the dimethylallyl diphosphate pocket. Isopentenyl diphosphate is bound at residue His-139. The active-site Proton donor is Glu-141. Thr-179 lines the (2E)-4-hydroxy-3-methylbut-2-enyl diphosphate pocket. Cys-209 contributes to the [4Fe-4S] cluster binding site. Residues Ser-237, Ser-238, Asn-239, and Ser-281 each contribute to the (2E)-4-hydroxy-3-methylbut-2-enyl diphosphate site. 4 residues coordinate dimethylallyl diphosphate: Ser-237, Ser-238, Asn-239, and Ser-281. Positions 237, 238, 239, and 281 each coordinate isopentenyl diphosphate.

Belongs to the IspH family. It depends on [4Fe-4S] cluster as a cofactor.

The catalysed reaction is isopentenyl diphosphate + 2 oxidized [2Fe-2S]-[ferredoxin] + H2O = (2E)-4-hydroxy-3-methylbut-2-enyl diphosphate + 2 reduced [2Fe-2S]-[ferredoxin] + 2 H(+). It carries out the reaction dimethylallyl diphosphate + 2 oxidized [2Fe-2S]-[ferredoxin] + H2O = (2E)-4-hydroxy-3-methylbut-2-enyl diphosphate + 2 reduced [2Fe-2S]-[ferredoxin] + 2 H(+). It participates in isoprenoid biosynthesis; dimethylallyl diphosphate biosynthesis; dimethylallyl diphosphate from (2E)-4-hydroxy-3-methylbutenyl diphosphate: step 1/1. The protein operates within isoprenoid biosynthesis; isopentenyl diphosphate biosynthesis via DXP pathway; isopentenyl diphosphate from 1-deoxy-D-xylulose 5-phosphate: step 6/6. Its function is as follows. Catalyzes the conversion of 1-hydroxy-2-methyl-2-(E)-butenyl 4-diphosphate (HMBPP) into a mixture of isopentenyl diphosphate (IPP) and dimethylallyl diphosphate (DMAPP). Acts in the terminal step of the DOXP/MEP pathway for isoprenoid precursor biosynthesis. This chain is 4-hydroxy-3-methylbut-2-enyl diphosphate reductase, found in Methylibium petroleiphilum (strain ATCC BAA-1232 / LMG 22953 / PM1).